We begin with the raw amino-acid sequence, 146 residues long: Hemoglobin subunit beta-1 (146 aa).

The 145-residue stretch at 2–146 folds into the Globin domain; that stretch reads EWSSNERSTI…VISALSRQYF (145 aa). The heme b site is built by His-63 and His-92.

Belongs to the globin family. Heterotetramer of two alpha chains and two beta chains. As to expression, red blood cells.

Functionally, involved in oxygen transport from gills to the various peripheral tissues. The protein is Hemoglobin subunit beta-1 (hbb1) of Muraena helena (Mediterranean moray).